A 360-amino-acid polypeptide reads, in one-letter code: Phenylalanine--tRNA ligase alpha subunit (360 aa).

Position 260 (glutamate 260) interacts with Mg(2+).

The protein belongs to the class-II aminoacyl-tRNA synthetase family. Phe-tRNA synthetase alpha subunit type 1 subfamily. As to quaternary structure, tetramer of two alpha and two beta subunits. It depends on Mg(2+) as a cofactor.

The protein localises to the cytoplasm. It catalyses the reaction tRNA(Phe) + L-phenylalanine + ATP = L-phenylalanyl-tRNA(Phe) + AMP + diphosphate + H(+). The protein is Phenylalanine--tRNA ligase alpha subunit of Afipia carboxidovorans (strain ATCC 49405 / DSM 1227 / KCTC 32145 / OM5) (Oligotropha carboxidovorans).